The primary structure comprises 330 residues: MNKTIYDITIVGGGPVGLFAAFYAGLRGVSVKIIESLSELGGQPAILYPEKKIYDIPGYPVITGRELIDKHIEQLERFKDSIEICLKEEVLSFEKVDDVFTIQTDKDQHLSRAIVFACGNGAFAPRLLGLENEENYADNNLFYNVTKLEQFAGKHVVICGGGDSAVDWANELDKIAASVAIVHRRDAFRAHEHSVDILKASGVRILTPYVPIGLNGDSQRVSSLVVQKVKGDEVIELPLDNLIVSFGFSTSNKNLRYWNLDYKRSSINVSSLFETTQEGVYAIGDAANYPGKVELIATGYGEAPVAINQAINYIYPDRDNRVVHSTSLIK.

Glutamate 35, glutamine 43, tyrosine 48, valine 90, phenylalanine 123, aspartate 285, and threonine 326 together coordinate FAD.

This sequence belongs to the ferredoxin--NADP reductase type 2 family. As to quaternary structure, homodimer. It depends on FAD as a cofactor.

The enzyme catalyses 2 reduced [2Fe-2S]-[ferredoxin] + NADP(+) + H(+) = 2 oxidized [2Fe-2S]-[ferredoxin] + NADPH. In Streptococcus agalactiae serotype Ia (strain ATCC 27591 / A909 / CDC SS700), this protein is Ferredoxin--NADP reductase.